We begin with the raw amino-acid sequence, 328 residues long: Phosphate acyltransferase (328 aa).

It belongs to the PlsX family. Homodimer. Probably interacts with PlsY.

The protein resides in the cytoplasm. It carries out the reaction a fatty acyl-[ACP] + phosphate = an acyl phosphate + holo-[ACP]. The protein operates within lipid metabolism; phospholipid metabolism. Functionally, catalyzes the reversible formation of acyl-phosphate (acyl-PO(4)) from acyl-[acyl-carrier-protein] (acyl-ACP). This enzyme utilizes acyl-ACP as fatty acyl donor, but not acyl-CoA. The chain is Phosphate acyltransferase from Campylobacter jejuni subsp. doylei (strain ATCC BAA-1458 / RM4099 / 269.97).